The following is a 514-amino-acid chain: Na(+)/H(+) antiporter NhaB (514 aa).

Helical transmembrane passes span L23–A43, P63–A83, L97–F117, L120–F140, F144–I164, L202–P222, F238–M258, A303–I323, L357–I377, L391–I411, A447–I467, and V475–F495.

It belongs to the NhaB Na(+)/H(+) (TC 2.A.34) antiporter family.

Its subcellular location is the cell inner membrane. It catalyses the reaction 2 Na(+)(in) + 3 H(+)(out) = 2 Na(+)(out) + 3 H(+)(in). Its function is as follows. Na(+)/H(+) antiporter that extrudes sodium in exchange for external protons. In Salmonella agona (strain SL483), this protein is Na(+)/H(+) antiporter NhaB.